Consider the following 149-residue polypeptide: Large ribosomal subunit protein bL9 (149 aa).

Belongs to the bacterial ribosomal protein bL9 family.

Functionally, binds to the 23S rRNA. The protein is Large ribosomal subunit protein bL9 of Tolumonas auensis (strain DSM 9187 / NBRC 110442 / TA 4).